The primary structure comprises 713 residues: BBSome complex assembly protein BBS10 (713 aa).

This sequence belongs to the TCP-1 chaperonin family. In terms of assembly, component of a complex composed at least of MKKS, BBS10, BBS12, TCP1, CCT2, CCT3, CCT4, CCT5 and CCT8.

The protein resides in the cell projection. It localises to the cilium. In terms of biological role, probable molecular chaperone that assists the folding of proteins upon ATP hydrolysis. Plays a role in the assembly of BBSome, a complex involved in ciliogenesis regulating transports vesicles to the cilia. Involved in adipogenic differentiation. The chain is BBSome complex assembly protein BBS10 (Bbs10) from Mus musculus (Mouse).